Here is a 245-residue protein sequence, read N- to C-terminus: 8-amino-3,8-dideoxy-manno-octulosonate cytidylyltransferase (245 aa).

The protein belongs to the KdsB family.

The protein resides in the cytoplasm. The enzyme catalyses 8-amino-3,8-dideoxy-alpha-D-manno-octulosonate + CTP = CMP-8-amino-3,8-dideoxy-alpha-D-manno-oct-2-ulosonate + diphosphate. It participates in bacterial outer membrane biogenesis; lipopolysaccharide biosynthesis. In terms of biological role, activates KDO8N (a required 8-carbon sugar) for incorporation into bacterial lipopolysaccharide in the Shewanella genus. This chain is 8-amino-3,8-dideoxy-manno-octulosonate cytidylyltransferase, found in Shewanella baltica (strain OS185).